The primary structure comprises 2604 residues: BEACH domain-containing protein B (2604 aa).

Residues 1761-1912 (VGTSEVLTSV…NAKEVGMLIV (152 aa)) enclose the BEACH-type PH domain. One can recognise a BEACH domain in the interval 1936-2226 (DRRIAMEMAE…QIFRKKHPRR (291 aa)). WD repeat units follow at residues 2254–2293 (HSPS…SGGN), 2368–2407 (HHKD…TPEK), 2433–2474 (GHDD…RSLK), 2476–2515 (PSGS…LASS), 2516–2557 (ESNG…KRYN), and 2558–2596 (GAGK…HRKP).

In terms of biological role, may be involved in the suppression of BCHC1 activity. The protein is BEACH domain-containing protein B of Arabidopsis thaliana (Mouse-ear cress).